Here is a 679-residue protein sequence, read N- to C-terminus: UvrABC system protein B (679 aa).

The Helicase ATP-binding domain occupies 31–414; it reads ENLTDGLAHQ…ELEKSGSEII (384 aa). 44 to 51 contacts ATP; that stretch reads GVTGSGKT. Positions 97-120 match the Beta-hairpin motif; it reads YYDYYQPEAYVPSSDTFIEKDASI. Positions 436–589 constitute a Helicase C-terminal domain; the sequence is QVDDLLSEAR…QTKYNEEHGI (154 aa). The region spanning 639–674 is the UVR domain; that stretch reads QQQIKKLEQQMYKFAQDLEFEKAAAIRDQLHQLREQ.

Belongs to the UvrB family. As to quaternary structure, forms a heterotetramer with UvrA during the search for lesions. Interacts with UvrC in an incision complex.

The protein resides in the cytoplasm. The UvrABC repair system catalyzes the recognition and processing of DNA lesions. A damage recognition complex composed of 2 UvrA and 2 UvrB subunits scans DNA for abnormalities. Upon binding of the UvrA(2)B(2) complex to a putative damaged site, the DNA wraps around one UvrB monomer. DNA wrap is dependent on ATP binding by UvrB and probably causes local melting of the DNA helix, facilitating insertion of UvrB beta-hairpin between the DNA strands. Then UvrB probes one DNA strand for the presence of a lesion. If a lesion is found the UvrA subunits dissociate and the UvrB-DNA preincision complex is formed. This complex is subsequently bound by UvrC and the second UvrB is released. If no lesion is found, the DNA wraps around the other UvrB subunit that will check the other stand for damage. The polypeptide is UvrABC system protein B (Haemophilus influenzae (strain ATCC 51907 / DSM 11121 / KW20 / Rd)).